A 163-amino-acid chain; its full sequence is NADH-quinone oxidoreductase subunit I (163 aa).

2 consecutive 4Fe-4S ferredoxin-type domains span residues 54 to 84 (LRRY…IDSA) and 94 to 123 (TRYD…ETHI). [4Fe-4S] cluster is bound by residues C64, C67, C70, C74, C103, C106, C109, and C113.

The protein belongs to the complex I 23 kDa subunit family. NDH-1 is composed of 14 different subunits. Subunits NuoA, H, J, K, L, M, N constitute the membrane sector of the complex. It depends on [4Fe-4S] cluster as a cofactor.

It is found in the cell inner membrane. The enzyme catalyses a quinone + NADH + 5 H(+)(in) = a quinol + NAD(+) + 4 H(+)(out). Its function is as follows. NDH-1 shuttles electrons from NADH, via FMN and iron-sulfur (Fe-S) centers, to quinones in the respiratory chain. The immediate electron acceptor for the enzyme in this species is believed to be ubiquinone. Couples the redox reaction to proton translocation (for every two electrons transferred, four hydrogen ions are translocated across the cytoplasmic membrane), and thus conserves the redox energy in a proton gradient. This chain is NADH-quinone oxidoreductase subunit I, found in Xanthomonas oryzae pv. oryzae (strain KACC10331 / KXO85).